A 565-amino-acid polypeptide reads, in one-letter code: MSSRLGAVPATSGPTTFKQQRSTRIVGAKNRTQCSIKDNSFQYTIPHDDSLSGSSSASSCEPVSDFPASFRKSTYWMKMRRIKPAATSHVEGSGGVSAKGKRKPRQEEDEDYREFPQKKHKLYGRKQRPKTQPNPKSQARRIRKEPPVYAAGSLEEQWYLEIVDKGSVSCPTCQAVGRKTIEGLKKHMENCKQEMFTCHHCGKQLRSLAGMKYHVMANHNSLPILKAGDEIDEPTERERLRTVLKRLGKLRCMRESCSSSFTSIMGYLYHVRKCGKGAAELEKMTLKCHHCGKPYRSKAGLAYHLRSEHGPISFFPESGQPECLKEMNLESKSGGRVQRRSAKIAVYHLQELASAELAKEWPKRKVLQDLVPDDRKLKYTRPGLPTFSQEVLHKWKTDIKKYHRIQCPNQGCEAVYSSVSGLKAHLGSCTLGNFVAGKYKCLLCQKEFVSESGVKYHINSVHAEDWFVVNPTTTKSFEKLMKIKQRQQEEEKRRQQHRSRRSLRRRQQPGIELPETELSLRVGKDQRRNEELVVSASCKEPEQEPVPAQFQKVKPPKTNHKRGRK.

The disordered stretch occupies residues 1-30 (MSSRLGAVPATSGPTTFKQQRSTRIVGAKN). Residues 12–23 (SGPTTFKQQRST) are compositionally biased toward polar residues. Residues Lys-18 and Lys-83 each participate in a glycyl lysine isopeptide (Lys-Gly) (interchain with G-Cter in SUMO2) cross-link. The disordered stretch occupies residues 85-147 (AATSHVEGSG…QARRIRKEPP (63 aa)). A compositionally biased stretch (basic residues) spans 118-129 (KKHKLYGRKQRP). A C2H2-type 1 zinc finger spans residues 196–219 (FTCHHCGKQLRSLAGMKYHVMANH). Residue Lys-226 forms a Glycyl lysine isopeptide (Lys-Gly) (interchain with G-Cter in SUMO2) linkage. The segment at 286-309 (LKCHHCGKPYRSKAGLAYHLRSEH) adopts a C2H2-type 2 zinc-finger fold. Residue Lys-332 forms a Glycyl lysine isopeptide (Lys-Gly) (interchain with G-Cter in SUMO2) linkage. Residues 405–429 (IQCPNQGCEAVYSSVSGLKAHLGSC) form a C2H2-type 3; atypical zinc finger. The C2H2-type 4 zinc finger occupies 439 to 462 (YKCLLCQKEFVSESGVKYHINSVH). The segment covering 484 to 493 (KQRQQEEEKR) has biased composition (basic and acidic residues). The tract at residues 484–565 (KQRQQEEEKR…PKTNHKRGRK (82 aa)) is disordered. The segment covering 494–507 (RQQHRSRRSLRRRQ) has biased composition (basic residues). Positions 522–531 (VGKDQRRNEE) are enriched in basic and acidic residues. Over residues 554–565 (KPPKTNHKRGRK) the composition is skewed to basic residues.

Belongs to the krueppel C2H2-type zinc-finger protein family.

The protein localises to the nucleus. In terms of biological role, may be involved in transcriptional regulation. This Macaca fascicularis (Crab-eating macaque) protein is Zinc finger protein 512 (ZNF512).